The primary structure comprises 110 residues: Large ribosomal subunit protein uL22 (110 aa).

This sequence belongs to the universal ribosomal protein uL22 family. Part of the 50S ribosomal subunit.

Its function is as follows. This protein binds specifically to 23S rRNA; its binding is stimulated by other ribosomal proteins, e.g. L4, L17, and L20. It is important during the early stages of 50S assembly. It makes multiple contacts with different domains of the 23S rRNA in the assembled 50S subunit and ribosome. Functionally, the globular domain of the protein is located near the polypeptide exit tunnel on the outside of the subunit, while an extended beta-hairpin is found that lines the wall of the exit tunnel in the center of the 70S ribosome. This chain is Large ribosomal subunit protein uL22, found in Haemophilus influenzae (strain 86-028NP).